A 161-amino-acid polypeptide reads, in one-letter code: Putative pre-16S rRNA nuclease (161 aa).

Belongs to the YqgF nuclease family.

The protein resides in the cytoplasm. In terms of biological role, could be a nuclease involved in processing of the 5'-end of pre-16S rRNA. This is Putative pre-16S rRNA nuclease from Bartonella bacilliformis (strain ATCC 35685 / KC583 / Herrer 020/F12,63).